Consider the following 82-residue polypeptide: Alpha-defensin 17 (82 aa).

Positions 1–8 (LLAFQVQA) are cleaved as a signal peptide. Positions 1–43 (LLAFQVQADPIQNTDEETKTEEQPGEEDQAVSVSFGDPEGTSL) are disordered. The propeptide occupies 9–47 (DPIQNTDEETKTEEQPGEEDQAVSVSFGDPEGTSLQEES). Disulfide bonds link Cys53-Cys81, Cys55-Cys70, and Cys60-Cys80.

Belongs to the alpha-defensin family.

It localises to the secreted. Its function is as follows. Probably contributes to the antimicrobial barrier function of the small bowel mucosa. This chain is Alpha-defensin 17 (Defa17), found in Mus musculus (Mouse).